The chain runs to 266 residues: tRNA pseudouridine synthase A (266 aa).

The active-site Nucleophile is aspartate 55. Residue tyrosine 110 coordinates substrate.

It belongs to the tRNA pseudouridine synthase TruA family.

It carries out the reaction uridine(38/39/40) in tRNA = pseudouridine(38/39/40) in tRNA. In terms of biological role, formation of pseudouridine at positions 38, 39 and 40 in the anticodon stem and loop of transfer RNAs. This Thermococcus sibiricus (strain DSM 12597 / MM 739) protein is tRNA pseudouridine synthase A.